Consider the following 528-residue polypeptide: Cytochrome P450 1A5 (528 aa).

Cys467 is a heme binding site.

Belongs to the cytochrome P450 family. The cofactor is heme.

Its subcellular location is the endoplasmic reticulum membrane. The protein localises to the microsome membrane. It carries out the reaction an organic molecule + reduced [NADPH--hemoprotein reductase] + O2 = an alcohol + oxidized [NADPH--hemoprotein reductase] + H2O + H(+). Its function is as follows. Cytochromes P450 are a group of heme-thiolate monooxygenases. In liver microsomes, this enzyme is involved in an NADPH-dependent electron transport pathway. It oxidizes a variety of structurally unrelated compounds, including steroids, fatty acids, and xenobiotics. In Gallus gallus (Chicken), this protein is Cytochrome P450 1A5 (CYP1A5).